Reading from the N-terminus, the 104-residue chain is Large ribosomal subunit protein bL21 (104 aa).

It belongs to the bacterial ribosomal protein bL21 family. In terms of assembly, part of the 50S ribosomal subunit. Contacts protein L20.

Its function is as follows. This protein binds to 23S rRNA in the presence of protein L20. The polypeptide is Large ribosomal subunit protein bL21 (Tropheryma whipplei (strain Twist) (Whipple's bacillus)).